Reading from the N-terminus, the 450-residue chain is Hyaluronidase-1 (450 aa).

An N-terminal signal peptide occupies residues 1–35; it reads MRPFSLEVSLHLPWAMAAHLLPVCTLFLNLLSMTQ. 2 cysteine pairs are disulfide-bonded: cysteine 58–cysteine 348 and cysteine 222–cysteine 236. Residue asparagine 85 is glycosylated (N-linked (GlcNAc...) asparagine). Glutamate 146 (proton donor) is an active-site residue. Residues asparagine 231 and asparagine 365 are each glycosylated (N-linked (GlcNAc...) asparagine). 3 disulfides stabilise this stretch: cysteine 373–cysteine 384, cysteine 378–cysteine 433, and cysteine 435–cysteine 444. Asparagine 398 carries an N-linked (GlcNAc...) asparagine glycan. One can recognise an EGF-like domain in the interval 433–444; that stretch reads CRCYRGWRGTRC.

This sequence belongs to the glycosyl hydrolase 56 family.

The protein resides in the secreted. The protein localises to the lysosome. It carries out the reaction Random hydrolysis of (1-&gt;4)-linkages between N-acetyl-beta-D-glucosamine and D-glucuronate residues in hyaluronate.. May have a role in promoting tumor progression. May block the TGFB1-enhanced cell growth. The polypeptide is Hyaluronidase-1 (HYAL1) (Bos taurus (Bovine)).